The chain runs to 426 residues: Histidine--tRNA ligase (426 aa).

Belongs to the class-II aminoacyl-tRNA synthetase family.

It is found in the cytoplasm. It carries out the reaction tRNA(His) + L-histidine + ATP = L-histidyl-tRNA(His) + AMP + diphosphate + H(+). This is Histidine--tRNA ligase from Saccharolobus islandicus (strain L.S.2.15 / Lassen #1) (Sulfolobus islandicus).